The following is a 236-amino-acid chain: Probable 2-phosphosulfolactate phosphatase (236 aa).

It belongs to the ComB family. Requires Mg(2+) as cofactor.

It catalyses the reaction (2R)-O-phospho-3-sulfolactate + H2O = (2R)-3-sulfolactate + phosphate. This chain is Probable 2-phosphosulfolactate phosphatase, found in Gloeobacter violaceus (strain ATCC 29082 / PCC 7421).